A 415-amino-acid chain; its full sequence is NEDD8-specific protease 2 (415 aa).

The disordered stretch occupies residues 1 to 42; it reads MRSNSIFTKEIDSEAVKKSSNLRPPSTGSSNSNGSDTASPKK. Over residues 26–38 the composition is skewed to low complexity; the sequence is STGSSNSNGSDTA. Ser-35 is subject to Phosphoserine. Residues His-171, Asp-188, and Cys-229 contribute to the active site. The disordered stretch occupies residues 320 to 415; the sequence is AVTSDSAQPH…QHTQQSIEIH (96 aa). Composition is skewed to polar residues over residues 335–368, 379–390, and 405–415; these read MPSSQPQSRSESLPLTHPNSEPNPKLDSQPNSSP, TASTSVLPTSIL, and IQHTQQSIEIH. Phosphoserine is present on Ser-367.

This sequence belongs to the peptidase C48 family.

The protein resides in the cytoplasm. It is found in the nucleus. In terms of biological role, protease that catalyzes two essential functions in the NEDD8 pathway: processing of full-length NEDD8 to its mature form and deconjugation of NEDD8 from targeted proteins such as the pcu1, pcu2 and pcu4 cullins and other proteins. Has a role in meiosis. The sequence is that of NEDD8-specific protease 2 (nep2) from Schizosaccharomyces pombe (strain 972 / ATCC 24843) (Fission yeast).